The sequence spans 263 residues: 5'-nucleotidase SurE (263 aa).

A divalent metal cation is bound by residues aspartate 21, aspartate 22, serine 52, and asparagine 105.

It belongs to the SurE nucleotidase family. It depends on a divalent metal cation as a cofactor.

It is found in the cytoplasm. The catalysed reaction is a ribonucleoside 5'-phosphate + H2O = a ribonucleoside + phosphate. Functionally, nucleotidase that shows phosphatase activity on nucleoside 5'-monophosphates. This Vibrio cholerae serotype O1 (strain ATCC 39541 / Classical Ogawa 395 / O395) protein is 5'-nucleotidase SurE.